Consider the following 631-residue polypeptide: Golgin subfamily A member 8R (631 aa).

The segment at 1–72 is disordered; it reads MAEETQHNKL…REGPTSSATL (72 aa). Residues 38–50 are compositionally biased toward polar residues; that stretch reads TNGSIPETATSGG. 3 coiled-coil regions span residues 85–149, 209–247, and 303–419; these read VLDS…NTDL, ELEQ…HIEG, and SEVE…LSLM. Disordered regions lie at residues 422–451, 502–523, and 551–610; these read PGEG…DPES, AKDA…DEGE, and NSAD…QEHP. Gly residues predominate over residues 507-519; it reads LGGGHHQAGAQGG. The segment covering 568–577 has biased composition (basic and acidic residues); it reads AADKHGDLRE.

It belongs to the GOLGA8 family.

The sequence is that of Golgin subfamily A member 8R from Homo sapiens (Human).